A 1196-amino-acid polypeptide reads, in one-letter code: Probable cation-transporting ATPase 13A4 (1196 aa).

The Cytoplasmic portion of the chain corresponds to 1–31 (MGHFEKGQHALLNEGEENEMEIFGYRTQGCR). The stretch at 32-52 (KSLCLAGSIFSFGILPLVFYW) is an intramembrane region. Topologically, residues 53-197 (RPAWHVWAHC…DVEVTPIWKL (145 aa)) are cytoplasmic. The helical transmembrane segment at 198–218 (LIKEVLNPFYIFQLFSVCLWF) threads the bilayer. Residues 219–223 (SEDYK) are Lumenal-facing. A helical membrane pass occupies residues 224 to 244 (EYAFAIIIMSIISISLTVYDL). The Cytoplasmic portion of the chain corresponds to 245-400 (REQSVKLHHL…NFQLYRDAIR (156 aa)). A helical membrane pass occupies residues 401 to 421 (FLLCLVGTATIGMIYTLCVYV). At 422–436 (LSGEPPEEVVRKALD) the chain is on the lumenal side. The chain crosses the membrane as a helical span at residues 437–457 (VITIAVPPALPAALTTGIIYA). Residues 458 to 900 (QRRLKKRGIF…KEGRAALVTS (443 aa)) lie on the Cytoplasmic side of the membrane. The active-site 4-aspartylphosphate intermediate is the D486. Residues D848 and D852 each contribute to the Mg(2+) site. Residues 901–921 (FCMFKYMALYSMIQYVGVLLL) traverse the membrane as a helical segment. Residues 922–932 (YWETNSLSNYQ) lie on the Lumenal side of the membrane. A helical transmembrane segment spans residues 933–953 (FLFQDLAITTLIGVTMNLNGA). The Cytoplasmic portion of the chain corresponds to 954-972 (YPKLVPFRPAGRLISPPLL). The helical transmembrane segment at 973-993 (LSVIFNILLSLAMHIAGFILV) threads the bilayer. Residues 994 to 1035 (QRQPWYSVEIHSACTVQNESISELTMSPTAPEKMESNSTFTS) lie on the Lumenal side of the membrane. A helical transmembrane segment spans residues 1036–1056 (FENTTVWFLGTINCITVALVF). Over 1057–1070 (SKGKPFRQPTYTNY) the chain is Cytoplasmic. A helical membrane pass occupies residues 1071 to 1091 (IFVLVLIIQLGVCLFILFADI). Residues 1092 to 1109 (PELYRRLDLLCTPVLWRA) are Lumenal-facing. A helical transmembrane segment spans residues 1110-1130 (SIVIMLSLNFIVSLVAEEAVI). Topologically, residues 1131 to 1196 (ENRALWMMIK…PVFESNEEQL (66 aa)) are cytoplasmic.

The protein belongs to the cation transport ATPase (P-type) (TC 3.A.3) family. Type V subfamily. Expressed in heart, placenta, liver, skeletal muscles, and pancreas. Lower levels of expression are also detected in brain, lung and kidney. Weakly expressed in the adult brain. Expression in fetal brain is higher than in adult brain, with levels similar to several other fetal tissues including spleen and skeletal muscle. In adult brain expressed at low levels in all tissues examined, including the temporal lobe and putamen. Highly expressed in the respiratory and integumentary systems.

The protein resides in the early endosome membrane. Its subcellular location is the late endosome membrane. The protein localises to the recycling endosome membrane. It carries out the reaction ATP + H2O = ADP + phosphate + H(+). This chain is Probable cation-transporting ATPase 13A4 (ATP13A4), found in Homo sapiens (Human).